Reading from the N-terminus, the 136-residue chain is Histone H3.1 (136 aa).

The tract at residues 1–43 (MARTKQTARKSTGGKAPRKQLATKAARKSAPATGGVKKPHRYR) is disordered. At Arg-3 the chain carries Asymmetric dimethylarginine; by PRMT6; alternate. Residue Arg-3 is modified to Citrulline; alternate. Thr-4 bears the Phosphothreonine; by HASPIN and VRK1 mark. Lys-5 is subject to Allysine; alternate. An N6,N6,N6-trimethyllysine; alternate modification is found at Lys-5. Lys-5 bears the N6,N6-dimethyllysine; alternate mark. Lys-5 is subject to N6-(2-hydroxyisobutyryl)lysine; alternate. Lys-5 is subject to N6-(beta-hydroxybutyryl)lysine; alternate. Residue Lys-5 is modified to N6-acetyllysine; alternate. An N6-crotonyllysine; alternate modification is found at Lys-5. N6-methyllysine; alternate is present on Lys-5. 5-glutamyl dopamine; alternate is present on Gln-6. Gln-6 carries the post-translational modification 5-glutamyl serotonin; alternate. Residue Thr-7 is modified to Phosphothreonine; by PKC. The residue at position 9 (Arg-9) is a Citrulline; alternate. The residue at position 9 (Arg-9) is a Symmetric dimethylarginine; by PRMT5; alternate. N6,N6,N6-trimethyllysine; alternate is present on Lys-10. Lys-10 carries the N6,N6-dimethyllysine; alternate modification. Lys-10 is modified (N6-(2-hydroxyisobutyryl)lysine; alternate). At Lys-10 the chain carries N6-(beta-hydroxybutyryl)lysine; alternate. Lys-10 is subject to N6-acetyllysine; alternate. Lys-10 bears the N6-crotonyllysine; alternate mark. At Lys-10 the chain carries N6-methyllysine; alternate. An N6-butyryllysine; alternate modification is found at Lys-10. Residue Lys-10 is modified to N6-lactoyllysine; alternate. The residue at position 11 (Ser-11) is an ADP-ribosylserine; alternate. Ser-11 is subject to Phosphoserine; alternate; by AURKB, AURKC, RPS6KA3, RPS6KA4 and RPS6KA5. The residue at position 12 (Thr-12) is a Phosphothreonine; by PKC and CHEK1. An N6-(2-hydroxyisobutyryl)lysine; alternate modification is found at Lys-15. N6-(beta-hydroxybutyryl)lysine; alternate is present on Lys-15. An N6-acetyllysine; alternate modification is found at Lys-15. Residue Lys-15 is modified to N6-lactoyllysine; alternate. At Lys-15 the chain carries N6-glutaryllysine; alternate. An N6-succinyllysine; alternate modification is found at Lys-15. Position 18 is a citrulline; alternate (Arg-18). An Asymmetric dimethylarginine; by CARM1; alternate modification is found at Arg-18. Residues Lys-19 and Lys-24 each carry the N6-(2-hydroxyisobutyryl)lysine; alternate modification. Residues Lys-19 and Lys-24 each carry the N6-(beta-hydroxybutyryl)lysine; alternate modification. An N6-acetyllysine; alternate mark is found at Lys-19 and Lys-24. An N6-crotonyllysine; alternate mark is found at Lys-19 and Lys-24. Residues Lys-19 and Lys-24 each carry the N6-methyllysine; alternate modification. Residues Lys-19 and Lys-24 each carry the N6-butyryllysine; alternate modification. An N6-lactoyllysine; alternate mark is found at Lys-19 and Lys-24. N6-glutaryllysine; alternate occurs at positions 19 and 24. Lys-19 carries N6-decanoyllysine lipidation. The residue at position 27 (Arg-27) is a Citrulline. An N6,N6,N6-trimethyllysine; alternate modification is found at Lys-28. Residue Lys-28 is modified to N6,N6-dimethyllysine; alternate. Lys-28 bears the N6-(2-hydroxyisobutyryl)lysine; alternate mark. Residue Lys-28 is modified to N6-(beta-hydroxybutyryl)lysine; alternate. N6-acetyllysine; alternate is present on Lys-28. At Lys-28 the chain carries N6-crotonyllysine; alternate. Lys-28 is modified (N6-methyllysine; alternate). At Lys-28 the chain carries N6-lactoyllysine; alternate. Lys-28 is modified (N6-glutaryllysine; alternate). At Ser-29 the chain carries ADP-ribosylserine; alternate. Ser-29 carries the phosphoserine; alternate; by AURKB, AURKC and RPS6KA5 modification. Residue Lys-37 is modified to N6,N6,N6-trimethyllysine; alternate. At Lys-37 the chain carries N6,N6-dimethyllysine; alternate. At Lys-37 the chain carries N6-(2-hydroxyisobutyryl)lysine; alternate. Lys-37 carries the post-translational modification N6-acetyllysine; alternate. At Lys-37 the chain carries N6-methyllysine; alternate. Residue Lys-38 is modified to N6-methyllysine. Tyr-42 carries the post-translational modification Phosphotyrosine. Lys-57 carries the N6,N6,N6-trimethyllysine; alternate modification. At Lys-57 the chain carries N6-(2-hydroxyisobutyryl)lysine; alternate. At Lys-57 the chain carries N6-(beta-hydroxybutyryl)lysine; alternate. Lys-57 is subject to N6-acetyllysine; alternate. Residue Lys-57 is modified to N6-crotonyllysine; alternate. N6-lactoyllysine; alternate is present on Lys-57. Lys-57 is subject to N6-glutaryllysine; alternate. Lys-57 bears the N6-succinyllysine; alternate mark. Lys-57 is subject to N6-methyllysine; by EHMT2; alternate. Ser-58 carries the post-translational modification Phosphoserine. An N6-(2-hydroxyisobutyryl)lysine; alternate mark is found at Lys-65 and Lys-80. N6-methyllysine; alternate is present on residues Lys-65 and Lys-80. Lys-80 bears the N6,N6,N6-trimethyllysine; alternate mark. Residue Lys-80 is modified to N6,N6-dimethyllysine; alternate. Lys-80 is subject to N6-(beta-hydroxybutyryl)lysine; alternate. N6-acetyllysine; alternate is present on Lys-80. N6-lactoyllysine; alternate is present on Lys-80. At Lys-80 the chain carries N6-glutaryllysine; alternate. The residue at position 80 (Lys-80) is an N6-succinyllysine; alternate. Thr-81 carries the post-translational modification Phosphothreonine. Ser-87 is modified (phosphoserine). At Thr-108 the chain carries Phosphothreonine. Lys-116 and Lys-123 each carry N6-acetyllysine; alternate. Lys-116 and Lys-123 each carry N6-glutaryllysine; alternate. Lys-123 is subject to N6-(2-hydroxyisobutyryl)lysine; alternate. The residue at position 123 (Lys-123) is an N6-(beta-hydroxybutyryl)lysine; alternate. Lys-123 carries the N6-methyllysine; alternate modification. Lys-123 is subject to N6-succinyllysine; alternate.

This sequence belongs to the histone H3 family. As to quaternary structure, the nucleosome is a histone octamer containing two molecules each of H2A, H2B, H3 and H4 assembled in one H3-H4 heterotetramer and two H2A-H2B heterodimers. The octamer wraps approximately 147 bp of DNA. Interacts with TONSL; CHAF1A; CHAF1B; MCM2 and DNAJC9. Interacts with NASP; NASP is a histone chaperone that stabilizes and maintains a soluble pool of Histone H3-H4 dimers. Post-translationally, acetylation is generally linked to gene activation. Acetylation on Lys-10 (H3K9ac) impairs methylation at Arg-9 (H3R8me2s). Acetylation on Lys-19 (H3K18ac) and Lys-24 (H3K24ac) favors methylation at Arg-18 (H3R17me). Acetylation at Lys-123 (H3K122ac) by EP300/p300 plays a central role in chromatin structure: localizes at the surface of the histone octamer and stimulates transcription, possibly by promoting nucleosome instability. In terms of processing, citrullination at Arg-9 (H3R8ci) and/or Arg-18 (H3R17ci) by PADI4 impairs methylation and represses transcription. Asymmetric dimethylation at Arg-18 (H3R17me2a) by CARM1 is linked to gene activation. Symmetric dimethylation at Arg-9 (H3R8me2s) by PRMT5 is linked to gene repression. Asymmetric dimethylation at Arg-3 (H3R2me2a) by PRMT6 is linked to gene repression and is mutually exclusive with H3 Lys-5 methylation (H3K4me2 and H3K4me3). H3R2me2a is present at the 3' of genes regardless of their transcription state and is enriched on inactive promoters, while it is absent on active promoters. Post-translationally, methylation at Lys-5 (H3K4me), Lys-37 (H3K36me) and Lys-80 (H3K79me) are linked to gene activation. Methylation at Lys-5 (H3K4me) facilitates subsequent acetylation of H3 and H4. Methylation at Lys-80 (H3K79me) is associated with DNA double-strand break (DSB) responses and is a specific target for TP53BP1. Methylation at Lys-10 (H3K9me) and Lys-28 (H3K27me) are linked to gene repression. Methylation at Lys-10 (H3K9me) is a specific target for HP1 proteins (CBX1, CBX3 and CBX5) and prevents subsequent phosphorylation at Ser-11 (H3S10ph) and acetylation of H3 and H4. Methylation at Lys-5 (H3K4me) and Lys-80 (H3K79me) require preliminary monoubiquitination of H2B at 'Lys-120'. Methylation at Lys-10 (H3K9me) and Lys-28 (H3K27me) are enriched in inactive X chromosome chromatin. Monomethylation at Lys-57 (H3K56me1) by EHMT2/G9A in G1 phase promotes interaction with PCNA and is required for DNA replication. In terms of processing, phosphorylated at Thr-4 (H3T3ph) by VRK1. Phosphorylated at Thr-4 (H3T3ph) by HASPIN during prophase and dephosphorylated during anaphase. Phosphorylation at Ser-11 (H3S10ph) by AURKB is crucial for chromosome condensation and cell-cycle progression during mitosis and meiosis. In addition phosphorylation at Ser-11 (H3S10ph) by RPS6KA4 and RPS6KA5 is important during interphase because it enables the transcription of genes following external stimulation, like mitogens, stress, growth factors or UV irradiation and result in the activation of genes, such as c-fos and c-jun. Phosphorylation at Ser-11 (H3S10ph), which is linked to gene activation, prevents methylation at Lys-10 (H3K9me) but facilitates acetylation of H3 and H4. Phosphorylation at Ser-11 (H3S10ph) by AURKB mediates the dissociation of HP1 proteins (CBX1, CBX3 and CBX5) from heterochromatin. Phosphorylation at Ser-11 (H3S10ph) is also an essential regulatory mechanism for neoplastic cell transformation. Phosphorylated at Ser-29 (H3S28ph) by MAP3K20 isoform 1, RPS6KA5 or AURKB during mitosis or upon ultraviolet B irradiation. Phosphorylation at Thr-7 (H3T6ph) by PRKCB is a specific tag for epigenetic transcriptional activation that prevents demethylation of Lys-5 (H3K4me) by LSD1/KDM1A. At centromeres, specifically phosphorylated at Thr-12 (H3T11ph) from prophase to early anaphase, by DAPK3 and PKN1. Phosphorylation at Thr-12 (H3T11ph) by PKN1 or isoform M2 of PKM (PKM2) is a specific tag for epigenetic transcriptional activation that promotes demethylation of Lys-10 (H3K9me) by KDM4C/JMJD2C. Phosphorylation at Thr-12 (H3T11ph) by chromatin-associated CHEK1 regulates the transcription of cell cycle regulatory genes by modulating acetylation of Lys-10 (H3K9ac). Phosphorylation at Tyr-42 (H3Y41ph) by JAK2 promotes exclusion of CBX5 (HP1 alpha) from chromatin. Monoubiquitinated by RAG1 in lymphoid cells, monoubiquitination is required for V(D)J recombination. Ubiquitinated by the CUL4-DDB-RBX1 complex in response to ultraviolet irradiation. This may weaken the interaction between histones and DNA and facilitate DNA accessibility to repair proteins. Post-translationally, lysine deamination at Lys-5 (H3K4all) to form allysine is mediated by LOXL2. Allysine formation by LOXL2 only takes place on H3K4me3 and results in gene repression. In terms of processing, crotonylation (Kcr) is specifically present in male germ cells and marks testis-specific genes in post-meiotic cells, including X-linked genes that escape sex chromosome inactivation in haploid cells. Crotonylation marks active promoters and enhancers and confers resistance to transcriptional repressors. It is also associated with post-meiotically activated genes on autosomes. Butyrylation of histones marks active promoters and competes with histone acetylation. It is present during late spermatogenesis. Post-translationally, succinylation at Lys-80 (H3K79succ) by KAT2A takes place with a maximum frequency around the transcription start sites of genes. It gives a specific tag for epigenetic transcription activation. Desuccinylation at Lys-123 (H3K122succ) by SIRT7 in response to DNA damage promotes chromatin condensation and double-strand breaks (DSBs) repair. In terms of processing, serine ADP-ribosylation by PARP1 or PARP2 constitutes the primary form of ADP-ribosylation of proteins in response to DNA damage. Serine ADP-ribosylation at Ser-11 (H3S10ADPr) promotes recruitment of CHD1L. H3S10ADPr is mutually exclusive with phosphorylation at Ser-11 (H3S10ph) and impairs acetylation at Lys-10 (H3K9ac). Serotonylated by TGM2 at Gln-6 (H3Q5ser) during serotonergic neuron differentiation. H3Q5ser is associated with trimethylation of Lys-5 (H3K4me3) and enhances general transcription factor IID (TFIID) complex-binding to H3K4me3, thereby facilitating transcription. Post-translationally, dopaminylated by TGM2 at Gln-6 (H3Q5dop) in ventral tegmental area (VTA) neurons. H3Q5dop mediates neurotransmission-independent role of nuclear dopamine by regulating relapse-related transcriptional plasticity in the reward system. In terms of processing, lactylated in macrophages by EP300/P300 by using lactoyl-CoA directly derived from endogenous or exogenous lactate, leading to stimulates gene transcription.

The protein resides in the nucleus. The protein localises to the chromosome. In terms of biological role, core component of nucleosome. Nucleosomes wrap and compact DNA into chromatin, limiting DNA accessibility to the cellular machineries which require DNA as a template. Histones thereby play a central role in transcription regulation, DNA repair, DNA replication and chromosomal stability. DNA accessibility is regulated via a complex set of post-translational modifications of histones, also called histone code, and nucleosome remodeling. This chain is Histone H3.1, found in Homo sapiens (Human).